Here is a 367-residue protein sequence, read N- to C-terminus: Anthranilate phosphoribosyltransferase (367 aa).

Residues 1 to 17 are compositionally biased toward low complexity; it reads MVLSSEASSAADHSAAA. The disordered stretch occupies residues 1–22; it reads MVLSSEASSAADHSAAAPIPTS. Residues glycine 104, 107 to 108, threonine 112, 114 to 117, 132 to 140, and glycine 144 each bind 5-phospho-alpha-D-ribose 1-diphosphate; these read GD, NLST, and KHGNRAASS. Position 104 (glycine 104) interacts with anthranilate. Position 116 (serine 116) interacts with Mg(2+). Asparagine 135 contacts anthranilate. Position 190 (arginine 190) interacts with anthranilate. 2 residues coordinate Mg(2+): aspartate 248 and glutamate 249.

This sequence belongs to the anthranilate phosphoribosyltransferase family. In terms of assembly, homodimer. It depends on Mg(2+) as a cofactor.

The enzyme catalyses N-(5-phospho-beta-D-ribosyl)anthranilate + diphosphate = 5-phospho-alpha-D-ribose 1-diphosphate + anthranilate. The protein operates within amino-acid biosynthesis; L-tryptophan biosynthesis; L-tryptophan from chorismate: step 2/5. In terms of biological role, catalyzes the transfer of the phosphoribosyl group of 5-phosphorylribose-1-pyrophosphate (PRPP) to anthranilate to yield N-(5'-phosphoribosyl)-anthranilate (PRA). The polypeptide is Anthranilate phosphoribosyltransferase (Mycobacterium marinum (strain ATCC BAA-535 / M)).